Consider the following 301-residue polypeptide: Structure-specific endonuclease subunit SLX1 (301 aa).

A GIY-YIG domain is found at 12–95 (AFYCCYLLRS…QHPYQTRFIK (84 aa)). Residues 216 to 283 (CAICEKIVDY…IPTSGQCPNC (68 aa)) form an SLX1-type zinc finger.

This sequence belongs to the SLX1 family. As to quaternary structure, forms a heterodimer with SLX4. A divalent metal cation serves as cofactor.

The protein resides in the nucleus. Its function is as follows. Catalytic subunit of the SLX1-SLX4 structure-specific endonuclease that resolves DNA secondary structures generated during DNA repair and recombination. Has endonuclease activity towards branched DNA substrates, introducing single-strand cuts in duplex DNA close to junctions with ss-DNA. This is Structure-specific endonuclease subunit SLX1 from Eremothecium gossypii (strain ATCC 10895 / CBS 109.51 / FGSC 9923 / NRRL Y-1056) (Yeast).